The sequence spans 158 residues: NAD(P)H-quinone oxidoreductase subunit J, chloroplastic (158 aa).

The protein belongs to the complex I 30 kDa subunit family. In terms of assembly, NDH is composed of at least 16 different subunits, 5 of which are encoded in the nucleus.

It is found in the plastid. The protein localises to the chloroplast thylakoid membrane. The enzyme catalyses a plastoquinone + NADH + (n+1) H(+)(in) = a plastoquinol + NAD(+) + n H(+)(out). It catalyses the reaction a plastoquinone + NADPH + (n+1) H(+)(in) = a plastoquinol + NADP(+) + n H(+)(out). In terms of biological role, NDH shuttles electrons from NAD(P)H:plastoquinone, via FMN and iron-sulfur (Fe-S) centers, to quinones in the photosynthetic chain and possibly in a chloroplast respiratory chain. The immediate electron acceptor for the enzyme in this species is believed to be plastoquinone. Couples the redox reaction to proton translocation, and thus conserves the redox energy in a proton gradient. In Cryptomeria japonica (Japanese cedar), this protein is NAD(P)H-quinone oxidoreductase subunit J, chloroplastic.